Reading from the N-terminus, the 674-residue chain is tRNA 5-methylaminomethyl-2-thiouridine biosynthesis bifunctional protein MnmC (674 aa).

The tRNA (mnm(5)s(2)U34)-methyltransferase stretch occupies residues 1 to 248 (MAASSLPSHN…KREMCFGRYA (248 aa)). Residues 276–674 (IGAGLAGATV…AIRHWRSGKR (399 aa)) are FAD-dependent cmnm(5)s(2)U34 oxidoreductase.

It in the N-terminal section; belongs to the methyltransferase superfamily. tRNA (mnm(5)s(2)U34)-methyltransferase family. In the C-terminal section; belongs to the DAO family. FAD is required as a cofactor.

It localises to the cytoplasm. It catalyses the reaction 5-aminomethyl-2-thiouridine(34) in tRNA + S-adenosyl-L-methionine = 5-methylaminomethyl-2-thiouridine(34) in tRNA + S-adenosyl-L-homocysteine + H(+). Its function is as follows. Catalyzes the last two steps in the biosynthesis of 5-methylaminomethyl-2-thiouridine (mnm(5)s(2)U) at the wobble position (U34) in tRNA. Catalyzes the FAD-dependent demodification of cmnm(5)s(2)U34 to nm(5)s(2)U34, followed by the transfer of a methyl group from S-adenosyl-L-methionine to nm(5)s(2)U34, to form mnm(5)s(2)U34. In Hydrogenovibrio crunogenus (strain DSM 25203 / XCL-2) (Thiomicrospira crunogena), this protein is tRNA 5-methylaminomethyl-2-thiouridine biosynthesis bifunctional protein MnmC.